A 327-amino-acid polypeptide reads, in one-letter code: GMP reductase (327 aa).

Cysteine 176 (thioimidate intermediate) is an active-site residue. Residue 205-228 (IIADGGIRTHGDIAKSIRFGASMV) participates in NADP(+) binding.

It belongs to the IMPDH/GMPR family. GuaC type 2 subfamily.

It carries out the reaction IMP + NH4(+) + NADP(+) = GMP + NADPH + 2 H(+). Its function is as follows. Catalyzes the irreversible NADPH-dependent deamination of GMP to IMP. It functions in the conversion of nucleobase, nucleoside and nucleotide derivatives of G to A nucleotides, and in maintaining the intracellular balance of A and G nucleotides. This Streptococcus suis (strain 05ZYH33) protein is GMP reductase.